Consider the following 353-residue polypeptide: Phospho-N-acetylmuramoyl-pentapeptide-transferase (353 aa).

The next 10 helical transmembrane spans lie at 22–42 (FAFF…ITWA), 65–85 (TPTM…LSCI), 88–108 (DNIF…IGLI), 129–149 (LLTQ…SSEL), 161–181 (PLFD…ISSS), 192–212 (GLAT…LYLS), 228–248 (GLGE…GFLW), 256–276 (VFMG…LAII), 281–301 (ILLL…ILQV), and 330–350 (KIIV…LASI).

It belongs to the glycosyltransferase 4 family. MraY subfamily. Requires Mg(2+) as cofactor.

The protein localises to the cell inner membrane. The enzyme catalyses UDP-N-acetyl-alpha-D-muramoyl-L-alanyl-gamma-D-glutamyl-meso-2,6-diaminopimeloyl-D-alanyl-D-alanine + di-trans,octa-cis-undecaprenyl phosphate = di-trans,octa-cis-undecaprenyl diphospho-N-acetyl-alpha-D-muramoyl-L-alanyl-D-glutamyl-meso-2,6-diaminopimeloyl-D-alanyl-D-alanine + UMP. It participates in cell wall biogenesis; peptidoglycan biosynthesis. Its function is as follows. Catalyzes the initial step of the lipid cycle reactions in the biosynthesis of the cell wall peptidoglycan: transfers peptidoglycan precursor phospho-MurNAc-pentapeptide from UDP-MurNAc-pentapeptide onto the lipid carrier undecaprenyl phosphate, yielding undecaprenyl-pyrophosphoryl-MurNAc-pentapeptide, known as lipid I. This is Phospho-N-acetylmuramoyl-pentapeptide-transferase from Campylobacter jejuni subsp. jejuni serotype O:23/36 (strain 81-176).